We begin with the raw amino-acid sequence, 307 residues long: HPr kinase/phosphorylase (307 aa).

Residues His136 and Lys157 contribute to the active site. ATP is bound at residue Gly151–Ser158. Residue Ser158 participates in Mg(2+) binding. Asp175 (proton acceptor; for phosphorylation activity. Proton donor; for dephosphorylation activity) is an active-site residue. Residues Leu198–Asp207 form an important for the catalytic mechanism of both phosphorylation and dephosphorylation region. Glu199 is a binding site for Mg(2+). Arg240 is an active-site residue. The tract at residues Pro261–Arg266 is important for the catalytic mechanism of dephosphorylation.

This sequence belongs to the HPrK/P family. Homohexamer. The cofactor is Mg(2+).

It carries out the reaction [HPr protein]-L-serine + ATP = [HPr protein]-O-phospho-L-serine + ADP + H(+). It catalyses the reaction [HPr protein]-O-phospho-L-serine + phosphate + H(+) = [HPr protein]-L-serine + diphosphate. Its function is as follows. Catalyzes the ATP- as well as the pyrophosphate-dependent phosphorylation of a specific serine residue in HPr, a phosphocarrier protein of the phosphoenolpyruvate-dependent sugar phosphotransferase system (PTS). HprK/P also catalyzes the pyrophosphate-producing, inorganic phosphate-dependent dephosphorylation (phosphorolysis) of seryl-phosphorylated HPr (P-Ser-HPr). The two antagonistic activities of HprK/P are regulated by several intracellular metabolites, which change their concentration in response to the absence or presence of rapidly metabolisable carbon sources (glucose, fructose, etc.) in the growth medium. Therefore, by controlling the phosphorylation state of HPr, HPrK/P is a sensor enzyme that plays a major role in the regulation of carbon metabolism and sugar transport: it mediates carbon catabolite repression (CCR), and regulates PTS-catalyzed carbohydrate uptake and inducer exclusion. The chain is HPr kinase/phosphorylase from Clostridium perfringens (strain 13 / Type A).